A 610-amino-acid polypeptide reads, in one-letter code: Replication factor C large subunit (610 aa).

55-62 (GPAGIGKT) is an ATP binding site. Basic and acidic residues-rich tracts occupy residues 467–478 (EKEGNASAEKPE), 502–515 (LPEK…KLPE), and 594–603 (DGSKKAEPKN). Positions 467–610 (EKEGNASAEK…PKNQKTLFDF (144 aa)) are disordered.

This sequence belongs to the activator 1 small subunits family. RfcL subfamily. In terms of assembly, heteromultimer composed of small subunits (RfcS) and large subunits (RfcL).

Its function is as follows. Part of the RFC clamp loader complex which loads the PCNA sliding clamp onto DNA. This Methanosarcina mazei (strain ATCC BAA-159 / DSM 3647 / Goe1 / Go1 / JCM 11833 / OCM 88) (Methanosarcina frisia) protein is Replication factor C large subunit.